The following is a 188-amino-acid chain: GTP cyclohydrolase 1 (188 aa).

Cysteine 76, histidine 79, and cysteine 148 together coordinate Zn(2+).

The protein belongs to the GTP cyclohydrolase I family. In terms of assembly, homomer.

It catalyses the reaction GTP + H2O = 7,8-dihydroneopterin 3'-triphosphate + formate + H(+). It participates in cofactor biosynthesis; 7,8-dihydroneopterin triphosphate biosynthesis; 7,8-dihydroneopterin triphosphate from GTP: step 1/1. The polypeptide is GTP cyclohydrolase 1 (Pelotomaculum thermopropionicum (strain DSM 13744 / JCM 10971 / SI)).